The chain runs to 389 residues: Chalcone synthase H2 (389 aa).

C164 is an active-site residue.

Belongs to the thiolase-like superfamily. Chalcone/stilbene synthases family.

It is found in the cytoplasm. It carries out the reaction (E)-4-coumaroyl-CoA + 3 malonyl-CoA + 3 H(+) = 2',4,4',6'-tetrahydroxychalcone + 3 CO2 + 4 CoA. Its pathway is secondary metabolite biosynthesis; flavonoid biosynthesis. Its function is as follows. Involved in the biosynthesis of prenylated phenolics natural products which contribute to the bitter taste of beer and display broad biological activities. Chalcone synthase that can use 4-coumaroyl-CoA to produce 4,2',4',6'-tetrahydroxychalcone (also termed naringenin-chalcone or chalcone) which can, under specific conditions, spontaneously isomerize into naringenin. This Humulus lupulus (European hop) protein is Chalcone synthase H2.